We begin with the raw amino-acid sequence, 87 residues long: Chaperone NapD (87 aa).

It belongs to the NapD family. In terms of assembly, interacts with the cytoplasmic NapA precursor.

The protein localises to the cytoplasm. In terms of biological role, chaperone for NapA, the catalytic subunit of the periplasmic nitrate reductase. It binds directly and specifically to the twin-arginine signal peptide of NapA, preventing premature interaction with the Tat translocase and premature export. The chain is Chaperone NapD from Escherichia coli O157:H7.